Here is a 70-residue protein sequence, read N- to C-terminus: DNA gyrase inhibitor YacG (70 aa).

The Zn(2+) site is built by C9, C12, C28, and C32. The tract at residues 43–70 is disordered; it reads ESRKIPGSSIDPESIVTSNNKQDNEDEQ.

Belongs to the DNA gyrase inhibitor YacG family. As to quaternary structure, interacts with GyrB. Zn(2+) is required as a cofactor.

Inhibits all the catalytic activities of DNA gyrase by preventing its interaction with DNA. Acts by binding directly to the C-terminal domain of GyrB, which probably disrupts DNA binding by the gyrase. This chain is DNA gyrase inhibitor YacG, found in Legionella pneumophila (strain Paris).